Consider the following 336-residue polypeptide: Phosphate acyltransferase (336 aa).

It belongs to the PlsX family. As to quaternary structure, homodimer. Probably interacts with PlsY.

It is found in the cytoplasm. It carries out the reaction a fatty acyl-[ACP] + phosphate = an acyl phosphate + holo-[ACP]. Its pathway is lipid metabolism; phospholipid metabolism. Functionally, catalyzes the reversible formation of acyl-phosphate (acyl-PO(4)) from acyl-[acyl-carrier-protein] (acyl-ACP). This enzyme utilizes acyl-ACP as fatty acyl donor, but not acyl-CoA. The protein is Phosphate acyltransferase of Pseudomonas fluorescens (strain ATCC BAA-477 / NRRL B-23932 / Pf-5).